An 802-amino-acid chain; its full sequence is Penicillin G acylase (802 aa).

The first 26 residues, 1–26, serve as a signal peptide directing secretion; sequence MKMKWLISVIILFVFIFPQNLVFAGE. A Ca(2+)-binding site is contributed by E177. Positions 235–265 are cleaved as a propeptide — spacer peptide; sequence SAVIKASEKVGKERENFVQSSEELGLPLKIG. S266 (nucleophile) is an active-site residue. D341 is a binding site for Ca(2+).

The protein belongs to the peptidase S45 family. In terms of assembly, heterodimer of an alpha subunit and a beta subunit processed from the same precursor. Ca(2+) serves as cofactor.

It localises to the secreted. The enzyme catalyses a penicillin + H2O = 6-aminopenicillanate + a carboxylate. The protein is Penicillin G acylase (pac) of Rhizobium viscosum (Arthrobacter viscosus).